The primary structure comprises 306 residues: Pantothenate kinase (306 aa).

91–98 (GSVAVGKS) contacts ATP.

It belongs to the prokaryotic pantothenate kinase family.

Its subcellular location is the cytoplasm. It carries out the reaction (R)-pantothenate + ATP = (R)-4'-phosphopantothenate + ADP + H(+). It functions in the pathway cofactor biosynthesis; coenzyme A biosynthesis; CoA from (R)-pantothenate: step 1/5. This is Pantothenate kinase (coaA) from Streptococcus pyogenes serotype M18 (strain MGAS8232).